The primary structure comprises 323 residues: UDP-N-acetylenolpyruvoylglucosamine reductase (323 aa).

An FAD-binding PCMH-type domain is found at Ile33–Gly214. The active-site Proton donor is the Ser243. Residue Glu315 is part of the active site.

Belongs to the MurB family. FAD is required as a cofactor.

The protein localises to the cytoplasm. The catalysed reaction is UDP-N-acetyl-alpha-D-muramate + NADP(+) = UDP-N-acetyl-3-O-(1-carboxyvinyl)-alpha-D-glucosamine + NADPH + H(+). The protein operates within cell wall biogenesis; peptidoglycan biosynthesis. Functionally, cell wall formation. The protein is UDP-N-acetylenolpyruvoylglucosamine reductase of Treponema denticola (strain ATCC 35405 / DSM 14222 / CIP 103919 / JCM 8153 / KCTC 15104).